The following is a 1195-amino-acid chain: Voltage-gated inwardly rectifying potassium channel KCNH7 (1195 aa).

Topologically, residues 1–412 (MPVRRGHVAP…YSPFKAVWDW (412 aa)) are cytoplasmic. In terms of domain architecture, PAS spans 41 to 70 (IIYCNDGFCEMTGFSRPDVMQKPCTCDFLH). The PAC domain occupies 92-144 (RKVEVTYYHKNGSTFICNTHIIPVKNQEGVAMMFIINFEYVTDEENAATPERV). The residue at position 174 (S174) is a Phosphoserine. Positions 194 to 216 (SVAMKHFKSPTKESCSPSEADDT) are disordered. A phosphoserine mark is found at S238 and S319. A helical membrane pass occupies residues 413 to 433 (LILLLVIYTAIFTPYSAAFLL). The Extracellular portion of the chain corresponds to 434-449 (NDREEQKRRECGYSCS). The helical transmembrane segment at 450 to 470 (PLNVVDLIVDIMFIIDILINF) threads the bilayer. Topologically, residues 471–494 (RTTYVNQNEEVVSDPAKIAIHYFK) are cytoplasmic. Residues 495–515 (GWFLIDMVAAIPFDLLIFGSG) traverse the membrane as a helical segment. The Extracellular portion of the chain corresponds to 516–521 (SDETTT). The chain crosses the membrane as a helical; Voltage-sensor span at residues 522-542 (LIGLLKTARLLRLVRVARKLD). At 543–549 (RYSEYGA) the chain is on the cytoplasmic side. Residues 550 to 570 (AVLMLLMCIFALIAHWLACIW) traverse the membrane as a helical segment. The Extracellular segment spans residues 571-614 (YAIGNVERPYLTDKIGWLDSLGTQIGKRYNDSDSSSGPSIKDKY). N600 is a glycosylation site (N-linked (GlcNAc...) asparagine). The segment at residues 615 to 635 (VTALYFTFSSLTSVGFGNVSP) is an intramembrane region (pore-forming). Positions 627-632 (SVGFGN) match the Selectivity filter motif. At 636 to 641 (NTNSEK) the chain is on the extracellular side. The chain crosses the membrane as a helical span at residues 642–662 (IFSICVMLIGSLMYASIFGNV). Topologically, residues 663–1195 (SAIIQRLYSG…HVSDPGLPGK (533 aa)) are cytoplasmic. The cNMP-binding domain stretch occupies residues 745–845 (AFRGASKGCL…IQREDLLEVL (101 aa)). Residues 870–915 (AKSQSVNDSEGDTGKLRRRRLSFESEGEKDFSKENSANDADDSTDT) are disordered. The span at 890–902 (LSFESEGEKDFSK) shows a compositional bias: basic and acidic residues. 2 positions are modified to phosphoserine: S891 and S894. A coiled-coil region spans residues 1027-1054 (YGEVEQRLDLLQEQLNRLESQMTTDIQA).

Belongs to the potassium channel family. H (Eag) (TC 1.A.1.20) subfamily. Kv11.3/KCNH7 sub-subfamily. In terms of assembly, the potassium channel is probably composed of a homo- or heterotetrameric complex of pore-forming alpha subunits that can associate only within their subfamily.

The protein resides in the cell membrane. It catalyses the reaction K(+)(in) = K(+)(out). Pore-forming (alpha) subunit of voltage-gated inwardly rectifying potassium channel. Exhibits faster activation and deactivation kinetics and slow inactivation at membrane potentials positive to 240 mV, resulting in the weakest inward rectification. This chain is Voltage-gated inwardly rectifying potassium channel KCNH7, found in Mus musculus (Mouse).